The following is a 752-amino-acid chain: Photosystem I P700 chlorophyll a apoprotein A1 (752 aa).

8 consecutive transmembrane segments (helical) span residues 73 to 96 (IFSA…FHGA), 159 to 182 (LYAT…FHYH), 198 to 222 (MNHH…HISI), 294 to 312 (TAHH…GHMY), 349 to 372 (WHAQ…HHMY), 388 to 414 (LSLF…IFMV), 436 to 458 (AIIS…LYIH), and 533 to 551 (FMVH…LILV). [4Fe-4S] cluster contacts are provided by Cys575 and Cys584. 2 helical membrane-spanning segments follow: residues 591–612 (HVFL…HFSW) and 666–688 (LSAY…MFLF). Residue His677 participates in chlorophyll a' binding. 2 residues coordinate chlorophyll a: Met685 and Tyr693. Phylloquinone is bound at residue Trp694. The helical transmembrane segment at 726-746 (AVGVAHYLLGGIGTTWAFFLA) threads the bilayer.

The protein belongs to the PsaA/PsaB family. The PsaA/B heterodimer binds the P700 chlorophyll special pair and subsequent electron acceptors. PSI consists of a core antenna complex that captures photons, and an electron transfer chain that converts photonic excitation into a charge separation. The eukaryotic PSI reaction center is composed of at least 11 subunits. It depends on P700 is a chlorophyll a/chlorophyll a' dimer, A0 is one or more chlorophyll a, A1 is one or both phylloquinones and FX is a shared 4Fe-4S iron-sulfur center. as a cofactor.

It localises to the plastid. The protein localises to the chloroplast thylakoid membrane. The enzyme catalyses reduced [plastocyanin] + hnu + oxidized [2Fe-2S]-[ferredoxin] = oxidized [plastocyanin] + reduced [2Fe-2S]-[ferredoxin]. In terms of biological role, psaA and PsaB bind P700, the primary electron donor of photosystem I (PSI), as well as the electron acceptors A0, A1 and FX. PSI is a plastocyanin/cytochrome c6-ferredoxin oxidoreductase, converting photonic excitation into a charge separation, which transfers an electron from the donor P700 chlorophyll pair to the spectroscopically characterized acceptors A0, A1, FX, FA and FB in turn. Oxidized P700 is reduced on the lumenal side of the thylakoid membrane by plastocyanin or cytochrome c6. The polypeptide is Photosystem I P700 chlorophyll a apoprotein A1 (Gracilaria tenuistipitata var. liui (Red alga)).